Consider the following 78-residue polypeptide: Large ribosomal subunit protein eL20 (78 aa).

Belongs to the eukaryotic ribosomal protein eL20 family. Part of the 50S ribosomal subunit. Binds 23S rRNA.

In Methanothermobacter thermautotrophicus (strain ATCC 29096 / DSM 1053 / JCM 10044 / NBRC 100330 / Delta H) (Methanobacterium thermoautotrophicum), this protein is Large ribosomal subunit protein eL20.